A 429-amino-acid polypeptide reads, in one-letter code: Gamma-glutamyl phosphate reductase (429 aa).

The protein belongs to the gamma-glutamyl phosphate reductase family.

Its subcellular location is the cytoplasm. It catalyses the reaction L-glutamate 5-semialdehyde + phosphate + NADP(+) = L-glutamyl 5-phosphate + NADPH + H(+). The protein operates within amino-acid biosynthesis; L-proline biosynthesis; L-glutamate 5-semialdehyde from L-glutamate: step 2/2. Its function is as follows. Catalyzes the NADPH-dependent reduction of L-glutamate 5-phosphate into L-glutamate 5-semialdehyde and phosphate. The product spontaneously undergoes cyclization to form 1-pyrroline-5-carboxylate. In Methylibium petroleiphilum (strain ATCC BAA-1232 / LMG 22953 / PM1), this protein is Gamma-glutamyl phosphate reductase.